The chain runs to 485 residues: Glutamyl-tRNA(Gln) amidotransferase subunit A (485 aa).

Residues K79 and S154 each act as charge relay system in the active site. S178 acts as the Acyl-ester intermediate in catalysis.

This sequence belongs to the amidase family. GatA subfamily. In terms of assembly, heterotrimer of A, B and C subunits.

It catalyses the reaction L-glutamyl-tRNA(Gln) + L-glutamine + ATP + H2O = L-glutaminyl-tRNA(Gln) + L-glutamate + ADP + phosphate + H(+). In terms of biological role, allows the formation of correctly charged Gln-tRNA(Gln) through the transamidation of misacylated Glu-tRNA(Gln) in organisms which lack glutaminyl-tRNA synthetase. The reaction takes place in the presence of glutamine and ATP through an activated gamma-phospho-Glu-tRNA(Gln). The chain is Glutamyl-tRNA(Gln) amidotransferase subunit A from Staphylococcus aureus (strain USA300 / TCH1516).